Consider the following 563-residue polypeptide: Formate--tetrahydrofolate ligase (563 aa).

65-72 (TPLGEGKT) contributes to the ATP binding site.

It belongs to the formate--tetrahydrofolate ligase family.

It catalyses the reaction (6S)-5,6,7,8-tetrahydrofolate + formate + ATP = (6R)-10-formyltetrahydrofolate + ADP + phosphate. The protein operates within one-carbon metabolism; tetrahydrofolate interconversion. This Cutibacterium acnes (strain DSM 16379 / KPA171202) (Propionibacterium acnes) protein is Formate--tetrahydrofolate ligase.